Here is a 376-residue protein sequence, read N- to C-terminus: MSASRTNVNVAIVGTGNIGGELLNQIKGFNENASTNGTTSFNVVAISSMEGHYVSKDYQPINLSEWKNLTSQNQGAYSLDALVDFLAKSPLPAILVDNTASEAIAQSYPKFLSKKINIATPNKKAFSASNDVYQNIIKASKESGALLMHEASVGAGLPIISTLKELIATGDEIIKIEGIFSGTLSYIFNVWSPNGKKGTASFSDIVKIAKQNGYTEPDPRDDLNGMDVARKVTILSRIAGVHVESASSFPVKSLIPEPLKSAVNAEEFLAGLPNFDSEFASMREEAEKEGKVVRFVGEADVANKTTLVKLEKYDASHPFANLQSSDNIISFTTKRYHTRPLVVIGAGAGAAVTAAGVLGDMIKIMSQVRASDAPSA.

NADP(+)-binding residues include N17 and I18. I18 provides a ligand contact to NAD(+). Residues I18, K67, T99, and K123 each contribute to the NADPH site. The NADP(+) site is built by T99 and K123. T99 contacts NAD(+). Positions 150, 153, 155, and 157 each coordinate Na(+). S201 is subject to Phosphoserine. Residues G213 and E216 each contribute to the NADP(+) site. L-homoserine is bound by residues E216 and D227. Residue K231 is the Proton donor of the active site. NADP(+) is bound at residue G349. G349 serves as a coordination point for NAD(+). NADPH is bound at residue G349.

This sequence belongs to the homoserine dehydrogenase family. A metal cation serves as cofactor.

The catalysed reaction is L-homoserine + NADP(+) = L-aspartate 4-semialdehyde + NADPH + H(+). It catalyses the reaction L-homoserine + NAD(+) = L-aspartate 4-semialdehyde + NADH + H(+). Its pathway is amino-acid biosynthesis; L-methionine biosynthesis via de novo pathway; L-homoserine from L-aspartate: step 3/3. It participates in amino-acid biosynthesis; L-threonine biosynthesis; L-threonine from L-aspartate: step 3/5. In terms of biological role, catalyzes the conversion of L-aspartate-beta-semialdehyde (L-Asa) to L-homoserine (L-Hse), the third step in the biosynthesis of amino acids that derive from aspartate (the aspartate family of amino acids), including methioinine and threonine, the latter of which is a precursor to isoleucine; production of homoserine leads to a branch-point in the pathway as it can either be O-phosphorylated for processing to threonine, or O-acylated for processing to methionine. The polypeptide is Homoserine dehydrogenase (Schizosaccharomyces pombe (strain 972 / ATCC 24843) (Fission yeast)).